A 268-amino-acid chain; its full sequence is GTP cyclohydrolase FolE2 (268 aa).

The protein belongs to the GTP cyclohydrolase IV family.

It carries out the reaction GTP + H2O = 7,8-dihydroneopterin 3'-triphosphate + formate + H(+). The protein operates within cofactor biosynthesis; 7,8-dihydroneopterin triphosphate biosynthesis; 7,8-dihydroneopterin triphosphate from GTP: step 1/1. Converts GTP to 7,8-dihydroneopterin triphosphate. This chain is GTP cyclohydrolase FolE2, found in Ralstonia nicotianae (strain ATCC BAA-1114 / GMI1000) (Ralstonia solanacearum).